A 386-amino-acid polypeptide reads, in one-letter code: Arginine biosynthesis bifunctional protein ArgJ (386 aa).

Positions 148, 170, 181, 261, 381, and 386 each coordinate substrate. Thr181 acts as the Nucleophile in catalysis.

This sequence belongs to the ArgJ family. Heterotetramer of two alpha and two beta chains.

The protein resides in the cytoplasm. The catalysed reaction is N(2)-acetyl-L-ornithine + L-glutamate = N-acetyl-L-glutamate + L-ornithine. It catalyses the reaction L-glutamate + acetyl-CoA = N-acetyl-L-glutamate + CoA + H(+). It participates in amino-acid biosynthesis; L-arginine biosynthesis; L-ornithine and N-acetyl-L-glutamate from L-glutamate and N(2)-acetyl-L-ornithine (cyclic): step 1/1. Its pathway is amino-acid biosynthesis; L-arginine biosynthesis; N(2)-acetyl-L-ornithine from L-glutamate: step 1/4. Its function is as follows. Catalyzes two activities which are involved in the cyclic version of arginine biosynthesis: the synthesis of N-acetylglutamate from glutamate and acetyl-CoA as the acetyl donor, and of ornithine by transacetylation between N(2)-acetylornithine and glutamate. The sequence is that of Arginine biosynthesis bifunctional protein ArgJ from Corynebacterium diphtheriae (strain ATCC 700971 / NCTC 13129 / Biotype gravis).